The primary structure comprises 453 residues: Tubulin alpha-13 chain (453 aa).

Q11 serves as a coordination point for GTP. An N6-acetyllysine modification is found at K40. E71, S140, G144, T145, T179, N206, and N228 together coordinate GTP. A Mg(2+)-binding site is contributed by E71. Residue E254 is part of the active site. Residues 429–453 (EKDYEEVGTESQEGDGEEGEDGGDQ) form a disordered region. Over residues 431-453 (DYEEVGTESQEGDGEEGEDGGDQ) the composition is skewed to acidic residues.

The protein belongs to the tubulin family. As to quaternary structure, dimer of alpha and beta chains. A typical microtubule is a hollow water-filled tube with an outer diameter of 25 nm and an inner diameter of 15 nM. Alpha-beta heterodimers associate head-to-tail to form protofilaments running lengthwise along the microtubule wall with the beta-tubulin subunit facing the microtubule plus end conferring a structural polarity. Microtubules usually have 13 protofilaments but different protofilament numbers can be found in some organisms and specialized cells. Mg(2+) is required as a cofactor. In terms of processing, acetylation of alpha chains at Lys-40 stabilizes microtubules and affects affinity and processivity of microtubule motors. This modification has a role in multiple cellular functions, ranging from cell motility, cell cycle progression or cell differentiation to intracellular trafficking and signaling.

The protein resides in the cytoplasm. It is found in the cytoskeleton. The catalysed reaction is GTP + H2O = GDP + phosphate + H(+). In terms of biological role, tubulin is the major constituent of microtubules, a cylinder consisting of laterally associated linear protofilaments composed of alpha- and beta-tubulin heterodimers. Microtubules grow by the addition of GTP-tubulin dimers to the microtubule end, where a stabilizing cap forms. Below the cap, tubulin dimers are in GDP-bound state, owing to GTPase activity of alpha-tubulin. This is Tubulin alpha-13 chain (TUBA13) from Naegleria pringsheimi (Amoeba).